The following is a 321-amino-acid chain: NADH-ubiquinone oxidoreductase chain 1 (321 aa).

8 consecutive transmembrane segments (helical) span residues 2–22 (LVML…VAFL), 71–91 (ALFI…WMFI), 104–124 (LLVI…SGWA), 148–168 (LGLI…QAFI), 173–193 (HTWF…STLA), 224–244 (LFFL…AIMF), 255–275 (ILPI…FLWI), and 295–315 (FLPL…SLGG).

This sequence belongs to the complex I subunit 1 family.

Its subcellular location is the mitochondrion inner membrane. It catalyses the reaction a ubiquinone + NADH + 5 H(+)(in) = a ubiquinol + NAD(+) + 4 H(+)(out). In terms of biological role, core subunit of the mitochondrial membrane respiratory chain NADH dehydrogenase (Complex I) that is believed to belong to the minimal assembly required for catalysis. Complex I functions in the transfer of electrons from NADH to the respiratory chain. The immediate electron acceptor for the enzyme is believed to be ubiquinone. The polypeptide is NADH-ubiquinone oxidoreductase chain 1 (MT-ND1) (Lampetra fluviatilis (European river lamprey)).